A 222-amino-acid polypeptide reads, in one-letter code: MKAAVVVFPGSNCDRDLAVAFEQAGFDVSMVWHKDSELPEGVDIVGVPGGFSYGDYLRCGAIAAQSPICKAVVAHAERGGYALGVCNGFQILTETGVLPGALLRNAGLKYICKTVDLAVATSDSAFTQGYNAGDVIGVPIAHHDGNYYADDATVQMLKDQDRVAFTYVDNPNGSVADIAGILSENRRVLGMMPHPERAADEGHGGTDGVAMFRALSGLLTDA.

The region spanning 3-222 is the Glutamine amidotransferase type-1 domain; it reads AAVVVFPGSN…RALSGLLTDA (220 aa). Cysteine 86 (nucleophile) is an active-site residue. Active-site residues include histidine 194 and glutamate 196.

In terms of assembly, part of the FGAM synthase complex composed of 1 PurL, 1 PurQ and 2 PurS subunits.

The protein resides in the cytoplasm. It catalyses the reaction N(2)-formyl-N(1)-(5-phospho-beta-D-ribosyl)glycinamide + L-glutamine + ATP + H2O = 2-formamido-N(1)-(5-O-phospho-beta-D-ribosyl)acetamidine + L-glutamate + ADP + phosphate + H(+). The catalysed reaction is L-glutamine + H2O = L-glutamate + NH4(+). It participates in purine metabolism; IMP biosynthesis via de novo pathway; 5-amino-1-(5-phospho-D-ribosyl)imidazole from N(2)-formyl-N(1)-(5-phospho-D-ribosyl)glycinamide: step 1/2. Its function is as follows. Part of the phosphoribosylformylglycinamidine synthase complex involved in the purines biosynthetic pathway. Catalyzes the ATP-dependent conversion of formylglycinamide ribonucleotide (FGAR) and glutamine to yield formylglycinamidine ribonucleotide (FGAM) and glutamate. The FGAM synthase complex is composed of three subunits. PurQ produces an ammonia molecule by converting glutamine to glutamate. PurL transfers the ammonia molecule to FGAR to form FGAM in an ATP-dependent manner. PurS interacts with PurQ and PurL and is thought to assist in the transfer of the ammonia molecule from PurQ to PurL. In Ruegeria sp. (strain TM1040) (Silicibacter sp.), this protein is Phosphoribosylformylglycinamidine synthase subunit PurQ.